The primary structure comprises 308 residues: Ribosomal RNA small subunit methyltransferase H (308 aa).

Residues 36–38 (GGH), Asp55, Phe86, Asp103, and Gln110 contribute to the S-adenosyl-L-methionine site.

The protein belongs to the methyltransferase superfamily. RsmH family.

The protein localises to the cytoplasm. The catalysed reaction is cytidine(1402) in 16S rRNA + S-adenosyl-L-methionine = N(4)-methylcytidine(1402) in 16S rRNA + S-adenosyl-L-homocysteine + H(+). Its function is as follows. Specifically methylates the N4 position of cytidine in position 1402 (C1402) of 16S rRNA. The chain is Ribosomal RNA small subunit methyltransferase H from Helicobacter pylori (strain B38).